A 438-amino-acid chain; its full sequence is Probable inactive protein kinase 38 (438 aa).

Positions 77-340 constitute a Protein kinase domain; that stretch reads PRFRLALGKG…FTELQPQYFL (264 aa).

This sequence belongs to the protein kinase superfamily. Tyr protein kinase family.

The sequence is that of Probable inactive protein kinase 38 (36) from Equus caballus (Horse).